Consider the following 379-residue polypeptide: MNNTEYYERLGVDKNASQDEIKKAYRKMSKKYHPDLNKEEGAEEKYKEVQEAYETLSDEQKRAAYDQYGEAGANGGFGGGGFGGASGFSGFGGGSGGFGGFEDIFSSFFGGGGAQVNPNAPRQGDDLQYRINLKFEEAIFGVEKQVKYNREELCHTCGGSGAKAGTHPETCHKCGGRGQINVVRDTPLGRMQTQVTCDVCNGTGKEIKEKCETCHGSGHEKVAHTVKVTVPAGVETGQKMRLQGQGDAGVNGGPYGDLYVVFQVEASDKFERDGAEIYYKMPMDFVQAALGDEIEVPTVHGNVKLKIPAGTQTGANFRLKGKGAPKLRGSGNGDQYVIINIVTPKNLNQAQKEALQAFAKASGVEVSGSGKKGFFDKFK.

Positions 5 to 69 (EYYERLGVDK…QKRAAYDQYG (65 aa)) constitute a J domain. The segment at 141–223 (GVEKQVKYNR…CHGSGHEKVA (83 aa)) adopts a CR-type zinc-finger fold. Cys-154, Cys-157, Cys-171, Cys-174, Cys-197, Cys-200, Cys-211, and Cys-214 together coordinate Zn(2+). 4 CXXCXGXG motif repeats span residues 154-161 (CHTCGGSG), 171-178 (CHKCGGRG), 197-204 (CDVCNGTG), and 211-218 (CETCHGSG).

This sequence belongs to the DnaJ family. As to quaternary structure, homodimer. Requires Zn(2+) as cofactor.

It is found in the cytoplasm. Its function is as follows. Participates actively in the response to hyperosmotic and heat shock by preventing the aggregation of stress-denatured proteins and by disaggregating proteins, also in an autonomous, DnaK-independent fashion. Unfolded proteins bind initially to DnaJ; upon interaction with the DnaJ-bound protein, DnaK hydrolyzes its bound ATP, resulting in the formation of a stable complex. GrpE releases ADP from DnaK; ATP binding to DnaK triggers the release of the substrate protein, thus completing the reaction cycle. Several rounds of ATP-dependent interactions between DnaJ, DnaK and GrpE are required for fully efficient folding. Also involved, together with DnaK and GrpE, in the DNA replication of plasmids through activation of initiation proteins. The polypeptide is Chaperone protein DnaJ (Lactococcus lactis subsp. lactis (strain IL1403) (Streptococcus lactis)).